The primary structure comprises 760 residues: uncharacterized protein (760 aa).

The segment covering 578 to 587 (RNRKQSKLRI) has biased composition (basic residues). Residues 578-604 (RNRKQSKLRISKQQEIQPQKEESVKKE) are disordered. A compositionally biased stretch (basic and acidic residues) spans 595–604 (PQKEESVKKE).

Its subcellular location is the mitochondrion. This is an uncharacterized protein from Dictyostelium citrinum (Slime mold).